The sequence spans 446 residues: Packaging protein 1 (446 aa).

Positions Met1 to Arg72 are disordered. Residues Leu10–Pro21 show a composition bias toward polar residues. The span at His32 to Glu43 shows a compositional bias: basic and acidic residues. ATP is bound at residue Gly170–Ser177. Residues Arg439 to Lys446 form a DNA-binding region.

This sequence belongs to the adenoviridae packaging protein 1 family. In terms of assembly, homodimer. Part of a genome packaging complex composed of packaging proteins 1, 2 and 3; this complex specifically binds to the packaging sequence on the left end of viral genomic DNA and performs packaging of the viral genome. Interacts with protein 33K.

The protein resides in the virion. It localises to the host nucleus. Its subcellular location is the host nucleoplasm. The protein localises to the host nucleolus. In terms of biological role, component of the packaging machinery which encapsidates the viral DNA into preformed capsids and transcriptional activator of the viral major late promoter (MLP). Binds, along with packaging proteins 2 and 3, to the specific packaging sequence on the left end of viral genomic DNA and displays ATPase activity thereby providing the power stroke of the packaging machinery. The activity of packaging protein IVa2 is stimulated by protein 33K which acts as a terminase. May be the protein that pumps DNA into the capsid powered by ATP hydrolysis. Specifically binds to the 5'-CG-3' nucleotides of the repeats making up the packaging sequence. Component of the DEF-A and DEF-B transcription factors that bind downstream elements of the major late promoter (MLP), and stimulate transcription from the MLP after initiation of viral DNA replication. DEF-A is a heterodimer packaging proteins 1 and 2 and DEF-B is a homodimer of packaging protein 1. The protein is Packaging protein 1 of Canine adenovirus serotype 1 (strain CLL) (CAdV-1).